We begin with the raw amino-acid sequence, 352 residues long: DNA integrity scanning protein DisA (352 aa).

In terms of domain architecture, DAC spans 3-143 (PQELIEKIKL…NYKYVVNQVD (141 aa)). Residues Gly71, Leu89, and 102 to 106 (TRHRT) each bind ATP.

This sequence belongs to the DisA family. As to quaternary structure, homooctamer. The cofactor is Mg(2+).

It carries out the reaction 2 ATP = 3',3'-c-di-AMP + 2 diphosphate. In terms of biological role, participates in a DNA-damage check-point. DisA forms globular foci that rapidly scan along the chromosomes searching for lesions. Functionally, also has diadenylate cyclase activity, catalyzing the condensation of 2 ATP molecules into cyclic di-AMP (c-di-AMP). c-di-AMP likely acts as a signaling molecule that may couple DNA integrity with a cellular process. This is DNA integrity scanning protein DisA from Thermotoga petrophila (strain ATCC BAA-488 / DSM 13995 / JCM 10881 / RKU-1).